Here is a 141-residue protein sequence, read N- to C-terminus: Small ribosomal subunit protein bS18c (141 aa).

Disordered regions lie at residues 14–55 (EFIA…IKPG) and 120–141 (IKRR…RPKK). Positions 24-34 (PKAPLQPPLPP) are enriched in pro residues. Over residues 35-51 (SKRKGKPPKSPRRRSSR) the composition is skewed to basic residues.

It belongs to the bacterial ribosomal protein bS18 family. As to quaternary structure, part of the 30S ribosomal subunit.

The protein resides in the plastid. Its subcellular location is the chloroplast. This Pelargonium hortorum (Common geranium) protein is Small ribosomal subunit protein bS18c.